Consider the following 79-residue polypeptide: MSDTAERVKKIVIEHLGVEESKVTESASFIDDLGADSLDTVELVMAFEEEFGIEIPDDAAEKILTVKDAIDFINQKTAA.

One can recognise a Carrier domain in the interval 2 to 77 (SDTAERVKKI…DAIDFINQKT (76 aa)). O-(pantetheine 4'-phosphoryl)serine is present on S37.

It belongs to the acyl carrier protein (ACP) family. Post-translationally, 4'-phosphopantetheine is transferred from CoA to a specific serine of apo-ACP by AcpS. This modification is essential for activity because fatty acids are bound in thioester linkage to the sulfhydryl of the prosthetic group.

The protein resides in the cytoplasm. Its pathway is lipid metabolism; fatty acid biosynthesis. Its function is as follows. Carrier of the growing fatty acid chain in fatty acid biosynthesis. The chain is Acyl carrier protein from Rhodospirillum centenum (strain ATCC 51521 / SW).